A 232-amino-acid chain; its full sequence is Ubiquinone biosynthesis O-methyltransferase (232 aa).

Arg-36, Gly-55, Asp-76, and Leu-120 together coordinate S-adenosyl-L-methionine.

It belongs to the methyltransferase superfamily. UbiG/COQ3 family.

The catalysed reaction is a 3-demethylubiquinol + S-adenosyl-L-methionine = a ubiquinol + S-adenosyl-L-homocysteine + H(+). It catalyses the reaction a 3-(all-trans-polyprenyl)benzene-1,2-diol + S-adenosyl-L-methionine = a 2-methoxy-6-(all-trans-polyprenyl)phenol + S-adenosyl-L-homocysteine + H(+). It participates in cofactor biosynthesis; ubiquinone biosynthesis. O-methyltransferase that catalyzes the 2 O-methylation steps in the ubiquinone biosynthetic pathway. In Pseudomonas putida (strain GB-1), this protein is Ubiquinone biosynthesis O-methyltransferase.